The chain runs to 413 residues: Methylaspartate ammonia-lyase (413 aa).

Q172 is a binding site for (2S,3S)-3-methyl-L-aspartate. Mg(2+)-binding residues include D238, E273, and D307. Position 329 (Q329) interacts with (2S,3S)-3-methyl-L-aspartate. K331 acts as the Proton acceptor in catalysis. 360-361 (TC) is a binding site for (2S,3S)-3-methyl-L-aspartate.

This sequence belongs to the methylaspartate ammonia-lyase family. Homodimer. Mg(2+) is required as a cofactor.

The enzyme catalyses (2S,3S)-3-methyl-L-aspartate = mesaconate + NH4(+). Its pathway is amino-acid degradation; L-glutamate degradation via mesaconate pathway; acetate and pyruvate from L-glutamate: step 2/4. In terms of biological role, involved in the methylaspartate cycle. Catalyzes the formation of the alpha,beta-unsaturated bond by the reversible anti elimination of ammonia from L-threo-beta-methylaspartate (L-threo-(2S,3S)-3-methylaspartate) to give mesaconate. The polypeptide is Methylaspartate ammonia-lyase (Citrobacter amalonaticus).